A 306-amino-acid chain; its full sequence is Lymphotoxin-beta (306 aa).

The Cytoplasmic segment spans residues 1–27 (MGTRGLQGLGGRPQGRGCLLLAVAGAT). Residues 28–48 (SLVTLLLAVPITVLAVLALVP) traverse the membrane as a helical; Signal-anchor for type II membrane protein segment. Topologically, residues 49–306 (QDQGRRVEKI…KTFFGAVMVG (258 aa)) are extracellular. Disordered stretches follow at residues 63–112 (AQAQ…GPVA) and 127–151 (PAAD…DLNP). The span at 74 to 85 (PSCILPSPSSLS) shows a compositional bias: low complexity. Polar residues predominate over residues 95–112 (QRSNASRNLASTSQGPVA). Asparagine 98 carries an N-linked (GlcNAc...) asparagine glycan. One can recognise a THD domain in the interval 154–305 (PAAHLIGAWM…GKTFFGAVMV (152 aa)). Asparagine 284 carries N-linked (GlcNAc...) asparagine glycosylation.

The protein belongs to the tumor necrosis factor family. Heterotrimer of either two LTB and one LTA subunits or (less prevalent) two LTA and one LTB subunits.

The protein resides in the membrane. Functionally, cytokine that binds to LTBR/TNFRSF3. May play a specific role in immune response regulation. Provides the membrane anchor for the attachment of the heterotrimeric complex to the cell surface. This chain is Lymphotoxin-beta (Ltb), found in Mus musculus (Mouse).